The sequence spans 358 residues: MNFTVGFKPLLGDAHSMDNLEKQLICPICLEMFSKPVVILPCQHNLCRKCANDVFQASNPLWQSRGSTTVSSGGRFRCPSCRHEVVLDRHGVYGLQRNLLVENIIDIYKQESSRPLHSKAEQHLMCEEHEEEKINIYCLSCEVPTCSLCKVFGAHKDCEVAPLPTIYKRQKSELSDGIAMLVAGNDRVQAVITQMEEVCQTIEDNSRRQKQLLNQRFESLCAVLEERKGELLQALAREQEEKLQRVRGLIRQYGDHLEASSKLVETAIQSMEEPQMALYLQQAKELINKVGAMSKVELAGRPEPGYESMEQFTVSVEHVAEMLRTIDFQPGASGEEEEVAPDGDEGSAGQEEERPDGP.

An RING-type zinc finger spans residues 26 to 82 (CPICLEMFSKPVVILPCQHNLCRKCANDVFQASNPLWQSRGSTTVSSGGRFRCPSCR). The B box-type zinc-finger motif lies at 121–163 (EQHLMCEEHEEEKINIYCLSCEVPTCSLCKVFGAHKDCEVAPL). Positions 126, 129, 149, and 155 each coordinate Zn(2+). Residues 168-211 (KRQKSELSDGIAMLVAGNDRVQAVITQMEEVCQTIEDNSRRQKQ) are mediates microtubule-binding and homooligomerization. The stretch at 194–258 (QMEEVCQTIE…LIRQYGDHLE (65 aa)) forms a coiled coil. Positions 271–329 (MEEPQMALYLQQAKELINKVGAMSKVELAGRPEPGYESMEQFTVSVEHVAEMLRTIDFQ) constitute a COS domain. Residues 326–358 (IDFQPGASGEEEEVAPDGDEGSAGQEEERPDGP) are disordered. Residues 334–345 (GEEEEVAPDGDE) show a composition bias toward acidic residues.

In terms of assembly, homooligomer and heterooligomer. Interacts with TRIM63 and probably with TRIM55. Interacts with tubulin.

The protein localises to the cytoplasm. It is found in the cytoskeleton. The protein resides in the myofibril. It localises to the sarcomere. Its subcellular location is the z line. In terms of biological role, may bind and stabilize microtubules during myotubes formation. This chain is Tripartite motif-containing protein 54 (TRIM54), found in Pongo abelii (Sumatran orangutan).